Consider the following 230-residue polypeptide: Ribonuclease HII (230 aa).

One can recognise an RNase H type-2 domain in the interval 28 to 217 (FRIAGIDEAG…VKEHLPSQPD (190 aa)). A divalent metal cation-binding residues include aspartate 34, glutamate 35, and aspartate 126. Positions 211–230 (HLPSQPDCDTAGPSTGLFSF) are disordered.

This sequence belongs to the RNase HII family. The cofactor is Mn(2+). Requires Mg(2+) as cofactor.

The protein resides in the cytoplasm. It catalyses the reaction Endonucleolytic cleavage to 5'-phosphomonoester.. Endonuclease that specifically degrades the RNA of RNA-DNA hybrids. This is Ribonuclease HII from Geobacter sp. (strain M21).